Reading from the N-terminus, the 280-residue chain is NLP effector protein Pc553546 (280 aa).

A signal peptide spans 1–19 (MNLVAALVLCFALLSSVRG). Residues 123–129 (AGRHDWA) carry the Hepta-peptide GHRHDWE motif motif. N-linked (GlcNAc...) asparagine glycosylation is found at Asn-142 and Asn-209.

This sequence belongs to the Necrosis inducing protein (NPP1) family.

Its subcellular location is the secreted. Secreted effector that contributes strongly to virulence during infection by P.capsici. The polypeptide is NLP effector protein Pc553546 (Phytophthora capsici).